The chain runs to 203 residues: Small ribosomal subunit protein eS1 (203 aa).

It belongs to the eukaryotic ribosomal protein eS1 family.

The chain is Small ribosomal subunit protein eS1 from Methanosarcina acetivorans (strain ATCC 35395 / DSM 2834 / JCM 12185 / C2A).